A 445-amino-acid chain; its full sequence is Sensor protein kinase CarS (445 aa).

The first 24 residues, 1-24 (MRSIQRRLSVGLFAVLLVVGLVLA), serve as a signal peptide directing secretion. Residues 150-170 (FARVQWMGLGAGALALLLVLL) traverse the membrane as a helical segment. Residues 177–228 (RRSLRPLEEVRLQIAQLQQGQRSQLDNQAPEELEPLVEQINHLLAHTEETLK) enclose the HAMP domain. In terms of domain architecture, Histidine kinase spans 236–438 (NLGHALKTPL…RVSVELPLQK (203 aa)). His-239 carries the phosphohistidine; by autocatalysis modification.

The protein localises to the membrane. It catalyses the reaction ATP + protein L-histidine = ADP + protein N-phospho-L-histidine.. In terms of biological role, member of the two-component regulatory system CarS/CarR that regulates the expression of multiple genes involved in calcium signaling and homeostasis including CarO and CarP. May function as a membrane-associated protein kinase that phosphorylates CarR in response to environmental signals leading to activation of specific gene promoters. The protein is Sensor protein kinase CarS (carS) of Pseudomonas aeruginosa (strain ATCC 15692 / DSM 22644 / CIP 104116 / JCM 14847 / LMG 12228 / 1C / PRS 101 / PAO1).